Consider the following 171-residue polypeptide: 3-hydroxydecanoyl-[acyl-carrier-protein] dehydratase (171 aa).

His-70 is a catalytic residue.

It belongs to the thioester dehydratase family. FabA subfamily. In terms of assembly, homodimer.

It localises to the cytoplasm. The catalysed reaction is a (3R)-hydroxyacyl-[ACP] = a (2E)-enoyl-[ACP] + H2O. It catalyses the reaction (3R)-hydroxydecanoyl-[ACP] = (2E)-decenoyl-[ACP] + H2O. It carries out the reaction (2E)-decenoyl-[ACP] = (3Z)-decenoyl-[ACP]. It functions in the pathway lipid metabolism; fatty acid biosynthesis. Its function is as follows. Necessary for the introduction of cis unsaturation into fatty acids. Catalyzes the dehydration of (3R)-3-hydroxydecanoyl-ACP to E-(2)-decenoyl-ACP and then its isomerization to Z-(3)-decenoyl-ACP. Can catalyze the dehydratase reaction for beta-hydroxyacyl-ACPs with saturated chain lengths up to 16:0, being most active on intermediate chain length. The sequence is that of 3-hydroxydecanoyl-[acyl-carrier-protein] dehydratase from Xanthomonas axonopodis pv. citri (strain 306).